Here is a 671-residue protein sequence, read N- to C-terminus: E3 ubiquitin-protein ligase pub2 (671 aa).

The 112-residue stretch at 1 to 112 (MENIRFEVQL…KDDYKTRITL (112 aa)) folds into the C2 domain. One can recognise a WW domain in the interval 242–275 (GPLPAGWEMRLSEDYHVYFVDHSTKTTTWSDPRD). The 334-residue stretch at 338-671 (SVSDMKKKLL…IQETAGFGTE (334 aa)) folds into the HECT domain. Cys639 functions as the Glycyl thioester intermediate in the catalytic mechanism.

In terms of assembly, interacts with the E2 ubiquitin-conjugating enzyme ubc4.

It is found in the membrane. The protein resides in the cytoplasm. It catalyses the reaction S-ubiquitinyl-[E2 ubiquitin-conjugating enzyme]-L-cysteine + [acceptor protein]-L-lysine = [E2 ubiquitin-conjugating enzyme]-L-cysteine + N(6)-ubiquitinyl-[acceptor protein]-L-lysine.. Its pathway is protein modification; protein ubiquitination. Functionally, E3 ubiquitin-protein ligase which accepts ubiquitin from an E2 ubiquitin-conjugating enzyme in the form of a thioester and then directly transfers the ubiquitin to targeted substrates. This Schizosaccharomyces pombe (strain 972 / ATCC 24843) (Fission yeast) protein is E3 ubiquitin-protein ligase pub2 (pub2).